The primary structure comprises 1066 residues: E3 ubiquitin-protein ligase PDZRN3 (1066 aa).

An RING-type; degenerate zinc finger spans residues 18–56 (CALCHKVLEDPLTTPCGHVFCAGCVLPWVVQEGSCPARC). The segment at 100-158 (EHLERCDFAPARCRHAGCGQVLLRRDVEAHMRDACDARPVGRCQEGCGLPLTHGEQRAG) adopts a TRAF-type zinc-finger fold. PDZ domains are found at residues 249–339 (TLVL…LRRT) and 419–503 (EVDL…IARP). Serine 427 is modified (phosphoserine). The disordered stretch occupies residues 545–603 (QKKHDEDGGTTDTATILSNQHEKDSGVGRTDESTRNDESSEQENNGDDATASSNPLAGQ). Polar residues predominate over residues 554-563 (TTDTATILSN). Residues 564–582 (QHEKDSGVGRTDESTRNDE) show a composition bias toward basic and acidic residues. Positions 594–603 (TASSNPLAGQ) are enriched in polar residues. Positions 679–704 (ESVDKELELLNEELRSIELECLSIVR) form a coiled coil. Basic and acidic residues predominate over residues 744-754 (TELPEKSDKDS). Disordered stretches follow at residues 744–778 (TELPEKSDKDSSSAYNTGESCRSTPLTLEISPDNS) and 808–863 (LLSI…LPSY). Polar residues-rich tracts occupy residues 755-769 (SSAYNTGESCRSTPL) and 845-855 (GSRSPTPSQKL). A coiled-coil region spans residues 975–1025 (KEERKQHLVKAKEQRRRREFMMQSRLDCLKEQQAADDRKEMNILELSHKKM).

Interacts with NLGN1 and EFNB2. Interacts with UBE2D2 and with MUSK via the first PDZ domain. Post-translationally, auto-ubiquitinated. In terms of tissue distribution, widely expressed, including in the heart, skeletal muscle and liver and, at lower levels, in the brain, colon, small intestine, placenta and lung. Down-regulated in ovarian serous papillary tumors.

The protein resides in the synapse. The protein localises to the cytoplasm. It catalyses the reaction S-ubiquitinyl-[E2 ubiquitin-conjugating enzyme]-L-cysteine + [acceptor protein]-L-lysine = [E2 ubiquitin-conjugating enzyme]-L-cysteine + N(6)-ubiquitinyl-[acceptor protein]-L-lysine.. Its pathway is protein modification; protein ubiquitination. Its function is as follows. E3 ubiquitin-protein ligase. Plays an important role in regulating the surface level of MUSK on myotubes. Mediates the ubiquitination of MUSK, promoting its endocytosis and lysosomal degradation. Might contribute to terminal myogenic differentiation. This chain is E3 ubiquitin-protein ligase PDZRN3 (PDZRN3), found in Homo sapiens (Human).